The chain runs to 212 residues: MITTDLFTRGWIFIRGVPAMKFLPPEGPPEIAFAGRSNVGKSSLINALVNQKGLARTSNTPGRTQELNYFVPDGFSGEGADLPPMALVDMPGYGYATAPKEKVDEWTKLVFDYLKGRVTLKRVYVLIDARHGIKAKDDEVLSLLDKAAVSYQIVLTKTDKIKVAGVPRLIEETLQKIKKRPAAFPFVLATSSEKGEGLEELQAAIVLAANGG.

Residues 27 to 211 (GPPEIAFAGR…QAAIVLAANG (185 aa)) enclose the EngB-type G domain. GTP-binding positions include 35–42 (GRSNVGKS), 62–66 (GRTQE), 89–92 (DMPG), 156–159 (TKTD), and 190–192 (TSS). Mg(2+) is bound by residues Ser42 and Thr64.

Belongs to the TRAFAC class TrmE-Era-EngA-EngB-Septin-like GTPase superfamily. EngB GTPase family. It depends on Mg(2+) as a cofactor.

Its function is as follows. Necessary for normal cell division and for the maintenance of normal septation. The protein is Probable GTP-binding protein EngB of Mesorhizobium japonicum (strain LMG 29417 / CECT 9101 / MAFF 303099) (Mesorhizobium loti (strain MAFF 303099)).